The following is a 603-amino-acid chain: MDTKDFKRLEKMYSPRYLPGLDGLRAFAVIGIIIYHLNAQWLSGGFLGVDTFFVISGYLITSLLISEYYRTQKIDLLEFWKRRLKRLIPAVLFLICVVLTFTLIFKPELIIQMKRDAIAAIFYVSNWWYISQNVDYFNQFAIEPLKHLWSLAIEEQFYLLFPLVITFLLHRFKPRNIIQTLFIVSLISLGLMIVIHFITGDNSRVYFGTDTRLQTLLLGCILAFIWPPFALKKDISKKIVVSLDIIGISGFAVLMTLFFIVGDQDQWIYNGGFYIISFATLFIIAIAVHPSSLFAKFLSMKPLLIIGKRSYSLYLWHYPIIVFVNSYYVQGQIPVYVYIIEILLTALMAEISYRFIETPIRKKGFKAFAFLPKKKSQFARTVLVILLLIPSIIVLSGQFDALGKQHEAEKKEKKTEFKTTKKKVVKKDKQEDKQTANSKEDIKKSSPLLIGDSVMVDIGNVFTKKIPNAQIDGKVGRQLVDATPIVKSQYKDYAKKGQKVVVELGTNGAFTKDQLNELLDSFGKADIYLVSIRVPRDYEGRINKLIYEAAEKRSNVHLVDWYKASAGHPEYFAYDGIHLEYAGSKALTDLIVKTMETHATNKK.

Transmembrane regions (helical) follow at residues 17–37 (YLPG…IYHL), 45–65 (GFLG…SLLI), 87–107 (LIPA…IFKP), 148–168 (LWSL…ITFL), 177–197 (IIQT…VIHF), 211–231 (TRLQ…PFAL), 239–259 (IVVS…TLFF), 268–288 (IYNG…AIAV), 311–331 (YSLY…YVQG), 333–353 (IPVY…EISY), and 382–402 (VLVI…FDAL). Active-site residues include Ser453, Asp575, and His578.

This sequence belongs to the acyltransferase 3 family.

It localises to the cell membrane. Its function is as follows. Responsible for O-acetylation at the C(6)-hydroxyl group of N-acetylmuramyl residues, forming the corresponding N,6-O-diacetylmuramic acid of the peptidoglycan. O-acetylation of the peptidoglycan is the major determinant for lysozyme resistance. In Staphylococcus aureus (strain MRSA252), this protein is O-acetyltransferase OatA (oatA).